The sequence spans 236 residues: 2,3,4,5-tetrahydropyridine-2,6-dicarboxylate N-acetyltransferase (236 aa).

The protein belongs to the transferase hexapeptide repeat family. DapH subfamily.

The enzyme catalyses (S)-2,3,4,5-tetrahydrodipicolinate + acetyl-CoA + H2O = L-2-acetamido-6-oxoheptanedioate + CoA. The protein operates within amino-acid biosynthesis; L-lysine biosynthesis via DAP pathway; LL-2,6-diaminopimelate from (S)-tetrahydrodipicolinate (acetylase route): step 1/3. In terms of biological role, catalyzes the transfer of an acetyl group from acetyl-CoA to tetrahydrodipicolinate. This chain is 2,3,4,5-tetrahydropyridine-2,6-dicarboxylate N-acetyltransferase, found in Thermotoga maritima (strain ATCC 43589 / DSM 3109 / JCM 10099 / NBRC 100826 / MSB8).